A 356-amino-acid polypeptide reads, in one-letter code: UDP-N-acetylglucosamine--N-acetylmuramyl-(pentapeptide) pyrophosphoryl-undecaprenol N-acetylglucosamine transferase (356 aa).

UDP-N-acetyl-alpha-D-glucosamine is bound by residues 12–14 (TGG), asparagine 124, arginine 163, serine 188, isoleucine 242, 261–266 (ALTVSE), and glutamine 287.

The protein belongs to the glycosyltransferase 28 family. MurG subfamily.

The protein resides in the cell inner membrane. It carries out the reaction di-trans,octa-cis-undecaprenyl diphospho-N-acetyl-alpha-D-muramoyl-L-alanyl-D-glutamyl-meso-2,6-diaminopimeloyl-D-alanyl-D-alanine + UDP-N-acetyl-alpha-D-glucosamine = di-trans,octa-cis-undecaprenyl diphospho-[N-acetyl-alpha-D-glucosaminyl-(1-&gt;4)]-N-acetyl-alpha-D-muramoyl-L-alanyl-D-glutamyl-meso-2,6-diaminopimeloyl-D-alanyl-D-alanine + UDP + H(+). Its pathway is cell wall biogenesis; peptidoglycan biosynthesis. Its function is as follows. Cell wall formation. Catalyzes the transfer of a GlcNAc subunit on undecaprenyl-pyrophosphoryl-MurNAc-pentapeptide (lipid intermediate I) to form undecaprenyl-pyrophosphoryl-MurNAc-(pentapeptide)GlcNAc (lipid intermediate II). This chain is UDP-N-acetylglucosamine--N-acetylmuramyl-(pentapeptide) pyrophosphoryl-undecaprenol N-acetylglucosamine transferase, found in Ectopseudomonas mendocina (strain ymp) (Pseudomonas mendocina).